Here is a 126-residue protein sequence, read N- to C-terminus: Fluoride-specific ion channel FluC (126 aa).

Helical transmembrane passes span 5–25 (GFVAVGVGAAVGAWLRWFFSV), 36–56 (YGTLASNLVGGYLIGLAVAFF), 69–89 (LAVTGFLGGLTTFSTFSSEVI), and 99–119 (WAMLHLAMHLGGSLLLTAFGI). 2 residues coordinate Na(+): glycine 76 and threonine 79.

Belongs to the fluoride channel Fluc/FEX (TC 1.A.43) family.

Its subcellular location is the cell inner membrane. The enzyme catalyses fluoride(in) = fluoride(out). Its activity is regulated as follows. Na(+) is not transported, but it plays an essential structural role and its presence is essential for fluoride channel function. Its function is as follows. Fluoride-specific ion channel. Important for reducing fluoride concentration in the cell, thus reducing its toxicity. In Cupriavidus metallidurans (strain ATCC 43123 / DSM 2839 / NBRC 102507 / CH34) (Ralstonia metallidurans), this protein is Fluoride-specific ion channel FluC.